Here is a 384-residue protein sequence, read N- to C-terminus: Neuropeptide Y receptor type 1 (384 aa).

The Extracellular segment spans residues 1 to 44 (MNSTLFSQVENHSVHSNFSEKNAQLLAFENDDCHLPLAMIFTLA). N-linked (GlcNAc...) asparagine glycans are attached at residues Asn2, Asn11, and Asn17. The chain crosses the membrane as a helical span at residues 45–65 (LAYGAVIILGVSGNLALIIII). At 66–76 (LKQKEMRNVTN) the chain is on the cytoplasmic side. The helical transmembrane segment at 77–97 (ILIVNLSFSDLLVAIMCLPFT) threads the bilayer. Residues 98 to 116 (FVYTLMDHWVFGEAMCKLN) are Extracellular-facing. The cysteines at positions 113 and 198 are disulfide-linked. The helical transmembrane segment at 117–137 (PFVQCVSITVSIFSLVLIAVE) threads the bilayer. Topologically, residues 138–154 (RHQLIINPRGWRPNNRH) are cytoplasmic. A helical membrane pass occupies residues 155-175 (AYVGIAVIWVLAVASSLPFLI). At 176–211 (YQVMTDEPFQNVTLDAYKDKYVCFDQFPSDSHRLSY) the chain is on the extracellular side. The helical transmembrane segment at 212-232 (TTLLLVLQYFGPLCFIFICYF) threads the bilayer. The Cytoplasmic segment spans residues 233 to 260 (KIYIRLKRRNNMMDKMRDNKYRSSETKR). A helical membrane pass occupies residues 261-281 (INIMLLSIVVAFAVCWLPLTI). The Extracellular segment spans residues 282-299 (FNTVFDWNHQIIATCNHN). Residues 300–320 (LLFLLCHLTAMISTCVNPIFY) form a helical membrane-spanning segment. Residues 321–384 (GFLNKNFQRD…INNNDDNEKI (64 aa)) are Cytoplasmic-facing. The S-palmitoyl cysteine moiety is linked to residue Cys338. Ser368 carries the post-translational modification Phosphoserine.

This sequence belongs to the G-protein coupled receptor 1 family.

The protein resides in the cell membrane. Its function is as follows. Receptor for neuropeptide Y and peptide YY. The rank order of affinity of this receptor for pancreatic polypeptides is NPY &gt; [Pro-34] PYY, PYY and [Leu-31, Pro-34] NPY &gt; NPY (2-36) &gt; [Ile-31, Gln-34] PP and PYY (3-36) &gt; PP &gt; NPY free acid. The sequence is that of Neuropeptide Y receptor type 1 (NPY1R) from Homo sapiens (Human).